The sequence spans 213 residues: Ion-translocating oxidoreductase complex subunit E (213 aa).

Helical transmembrane passes span 25–45 (TFGL…VENG), 46–66 (IGMA…VSAI), 77–97 (PVEI…MEAF), 100–120 (DLYT…IVIG), 135–155 (IIDA…IGGI), and 181–201 (AMFM…MTIV).

It belongs to the NqrDE/RnfAE family. The Rnf complex is probably composed of eight subunits, including RnfA, RnfB, RnfC, RnfD, RnfE and RnfG.

The protein localises to the cell membrane. Its function is as follows. Part of a membrane-bound complex that couples electron transfer with translocation of ions across the membrane. Catalyzes Na(+) transport, most probably coupled to electron transfer from reduced ferredoxin to methanophenazine and heterodisulfide reductase. Involved in heterodisulfide reduction during methanogenesis from acetate. This is Ion-translocating oxidoreductase complex subunit E from Methanosarcina acetivorans (strain ATCC 35395 / DSM 2834 / JCM 12185 / C2A).